Reading from the N-terminus, the 429-residue chain is Probable M18 family aminopeptidase 2 (429 aa).

Zn(2+) contacts are provided by His-82, His-156, and His-401.

This sequence belongs to the peptidase M18 family. It depends on Zn(2+) as a cofactor.

The chain is Probable M18 family aminopeptidase 2 from Pseudomonas fluorescens (strain Pf0-1).